We begin with the raw amino-acid sequence, 419 residues long: Pyrophosphate--fructose 6-phosphate 1-phosphotransferase (419 aa).

Diphosphate is bound at residue Gly-12. Asp-107 contacts Mg(2+). Substrate contacts are provided by residues 132 to 134 (TID), 178 to 180 (MGR), Glu-238, and 300 to 303 (YELR). The active-site Proton acceptor is the Asp-134.

This sequence belongs to the phosphofructokinase type A (PFKA) family. PPi-dependent PFK group II subfamily. Clade 'Short' sub-subfamily. Homodimer. It depends on Mg(2+) as a cofactor. Co(2+) is required as a cofactor. The cofactor is Mn(2+). Requires Ni(2+) as cofactor.

It is found in the cytoplasm. It catalyses the reaction beta-D-fructose 6-phosphate + diphosphate = beta-D-fructose 1,6-bisphosphate + phosphate + H(+). It participates in carbohydrate degradation; glycolysis; D-glyceraldehyde 3-phosphate and glycerone phosphate from D-glucose: step 3/4. With respect to regulation, non-allosteric. In terms of biological role, catalyzes the phosphorylation of D-fructose 6-phosphate, the first committing step of glycolysis. Uses inorganic phosphate (PPi) as phosphoryl donor instead of ATP like common ATP-dependent phosphofructokinases (ATP-PFKs), which renders the reaction reversible, and can thus function both in glycolysis and gluconeogenesis. Consistently, PPi-PFK can replace the enzymes of both the forward (ATP-PFK) and reverse (fructose-bisphosphatase (FBPase)) reactions. This Thermotoga maritima (strain ATCC 43589 / DSM 3109 / JCM 10099 / NBRC 100826 / MSB8) protein is Pyrophosphate--fructose 6-phosphate 1-phosphotransferase.